The following is a 156-amino-acid chain: ATP synthase subunit b (156 aa).

The chain crosses the membrane as a helical span at residues 11-31; the sequence is AIAFVLFVMFCMKFVWPPIMA.

It belongs to the ATPase B chain family. As to quaternary structure, F-type ATPases have 2 components, F(1) - the catalytic core - and F(0) - the membrane proton channel. F(1) has five subunits: alpha(3), beta(3), gamma(1), delta(1), epsilon(1). F(0) has three main subunits: a(1), b(2) and c(10-14). The alpha and beta chains form an alternating ring which encloses part of the gamma chain. F(1) is attached to F(0) by a central stalk formed by the gamma and epsilon chains, while a peripheral stalk is formed by the delta and b chains.

Its subcellular location is the cell inner membrane. Functionally, f(1)F(0) ATP synthase produces ATP from ADP in the presence of a proton or sodium gradient. F-type ATPases consist of two structural domains, F(1) containing the extramembraneous catalytic core and F(0) containing the membrane proton channel, linked together by a central stalk and a peripheral stalk. During catalysis, ATP synthesis in the catalytic domain of F(1) is coupled via a rotary mechanism of the central stalk subunits to proton translocation. Component of the F(0) channel, it forms part of the peripheral stalk, linking F(1) to F(0). The sequence is that of ATP synthase subunit b from Photorhabdus laumondii subsp. laumondii (strain DSM 15139 / CIP 105565 / TT01) (Photorhabdus luminescens subsp. laumondii).